Reading from the N-terminus, the 95-residue chain is UPF0235 protein AnaeK_1146 (95 aa).

This sequence belongs to the UPF0235 family.

The protein is UPF0235 protein AnaeK_1146 of Anaeromyxobacter sp. (strain K).